Consider the following 482-residue polypeptide: tRNA sulfurtransferase (482 aa).

The 105-residue stretch at 61 to 165 folds into the THUMP domain; that stretch reads DVTLSVLTQT…NDKLNLIIAR (105 aa). Residues 183–184, K265, G287, and Q296 each bind ATP; that span reads LI. A disulfide bridge links C344 with C456. The region spanning 404–482 is the Rhodanese domain; that stretch reads LGSDVVVLDI…GYKNVKVYRP (79 aa). The active-site Cysteine persulfide intermediate is the C456.

This sequence belongs to the ThiI family.

It localises to the cytoplasm. It carries out the reaction [ThiI sulfur-carrier protein]-S-sulfanyl-L-cysteine + a uridine in tRNA + 2 reduced [2Fe-2S]-[ferredoxin] + ATP + H(+) = [ThiI sulfur-carrier protein]-L-cysteine + a 4-thiouridine in tRNA + 2 oxidized [2Fe-2S]-[ferredoxin] + AMP + diphosphate. The enzyme catalyses [ThiS sulfur-carrier protein]-C-terminal Gly-Gly-AMP + S-sulfanyl-L-cysteinyl-[cysteine desulfurase] + AH2 = [ThiS sulfur-carrier protein]-C-terminal-Gly-aminoethanethioate + L-cysteinyl-[cysteine desulfurase] + A + AMP + 2 H(+). It participates in cofactor biosynthesis; thiamine diphosphate biosynthesis. Functionally, catalyzes the ATP-dependent transfer of a sulfur to tRNA to produce 4-thiouridine in position 8 of tRNAs, which functions as a near-UV photosensor. Also catalyzes the transfer of sulfur to the sulfur carrier protein ThiS, forming ThiS-thiocarboxylate. This is a step in the synthesis of thiazole, in the thiamine biosynthesis pathway. The sulfur is donated as persulfide by IscS. This Aliivibrio fischeri (strain MJ11) (Vibrio fischeri) protein is tRNA sulfurtransferase.